We begin with the raw amino-acid sequence, 273 residues long: Kit ligand (273 aa).

An N-terminal signal peptide occupies residues 1–25; the sequence is MKKTQTWIITCIYLQLLLFNPLVKT. Gln-26 carries the pyrrolidone carboxylic acid modification. Topologically, residues 26 to 214 are extracellular; it reads QEICRNPVTD…AKSPEDPGLQ (189 aa). 2 disulfide bridges follow: Cys-29-Cys-114 and Cys-68-Cys-163. Asn-90 is a glycosylation site (N-linked (GlcNAc...) asparagine; partial). Asn-145 carries an N-linked (GlcNAc...) asparagine glycan. An O-linked (GalNAc...) serine glycan is attached at Ser-167. O-linked (GalNAc...) threonine glycans are attached at residues Thr-168 and Thr-180. A disordered region spans residues 190–211; sequence ASSLRNDSSSSNRKAAKSPEDP. Over residues 191-202 the composition is skewed to low complexity; it reads SSLRNDSSSSNR. N-linked (GlcNAc...) asparagine glycosylation is present at Asn-195. The helical transmembrane segment at 215–237 threads the bilayer; that stretch reads WTAMALPALISLVIGFAFGALYW. Topologically, residues 238–273 are cytoplasmic; it reads KKKQSSLTRAVENIQINEEDNEISMLQQKEREFQEV.

It belongs to the SCF family. Homodimer, non-covalently linked. Heterotetramer with KIT, binding two KIT molecules; thereby mediates KIT dimerization and subsequent activation by autophosphorylation. A soluble form is produced by proteolytic processing of isoform 1 in the extracellular domain. Post-translationally, the identity of N- and O-linked saccharides is not reported in PubMed:1708771. The O-linked polysaccharides are probably the mucin type linked to GalNAc.

It localises to the cell membrane. Its subcellular location is the cytoplasm. The protein resides in the cytoskeleton. The protein localises to the cell projection. It is found in the lamellipodium. It localises to the filopodium. Its subcellular location is the secreted. Functionally, ligand for the receptor-type protein-tyrosine kinase KIT. Plays an essential role in the regulation of cell survival and proliferation, hematopoiesis, stem cell maintenance, gametogenesis, mast cell development, migration and function, and in melanogenesis. KITLG/SCF binding can activate several signaling pathways. Promotes phosphorylation of PIK3R1, the regulatory subunit of phosphatidylinositol 3-kinase, and subsequent activation of the kinase AKT1. KITLG/SCF and KIT also transmit signals via GRB2 and activation of RAS, RAF1 and the MAP kinases MAPK1/ERK2 and/or MAPK3/ERK1. KITLG/SCF and KIT promote activation of STAT family members STAT1, STAT3 and STAT5. KITLG/SCF and KIT promote activation of PLCG1, leading to the production of the cellular signaling molecules diacylglycerol and inositol 1,4,5-trisphosphate. KITLG/SCF acts synergistically with other cytokines, probably interleukins. This is Kit ligand (Kitlg) from Rattus norvegicus (Rat).